The following is a 208-amino-acid chain: Large ribosomal subunit protein uL4 (208 aa).

The tract at residues 45 to 89 is disordered; that stretch reads RQGTHAHKNRSAVSGGGKKPWRQKGTGRARQGSTRSPQWRGGGTV.

This sequence belongs to the universal ribosomal protein uL4 family. Part of the 50S ribosomal subunit.

Its function is as follows. One of the primary rRNA binding proteins, this protein initially binds near the 5'-end of the 23S rRNA. It is important during the early stages of 50S assembly. It makes multiple contacts with different domains of the 23S rRNA in the assembled 50S subunit and ribosome. In terms of biological role, forms part of the polypeptide exit tunnel. This is Large ribosomal subunit protein uL4 from Lactococcus lactis subsp. cremoris (strain MG1363).